We begin with the raw amino-acid sequence, 732 residues long: TIR domain-containing adapter molecule 1 (732 aa).

Positions 1-153 (MDNPGPSLRG…CSSDIKGDPS (153 aa)) are TRIF-NTD. Positions 84-91 (EGPEEPPD) match the TRAF6-binding motif. Positions 144–191 (CSSDIKGDPSGFQPLHSHQGSLQPPSASPAVTRSQPRPIDTPDWSWGH) are disordered. Residues 159-178 (HSHQGSLQPPSASPAVTRSQ) are compositionally biased toward polar residues. Positions 206-209 (LEIS) match the pLxIS motif motif. Ser-209 carries the phosphoserine modification. Lys-228 participates in a covalent cross-link: Glycyl lysine isopeptide (Lys-Gly) (interchain with G-Cter in ubiquitin). Short sequence motifs (TRAF6-binding) lie at residues 247–254 (QEPEEISW) and 296–306 (HCPIECTELST). Residues 305–331 (STNSRSPLTSTTESVGKQWPITSQRSP) show a composition bias toward polar residues. Positions 305–389 (STNSRSPLTS…TSTSPVLDHS (85 aa)) are disordered. Positions 345–359 (SSSPPAQPPSLQASP) are enriched in low complexity. One can recognise a TIR domain in the interval 395 to 534 (KFYNFVVIHA…KVANTFKTQK (140 aa)). The tract at residues 514–713 (WLDEHSPIFA…SSDDKTECSE (200 aa)) is sufficient to induce apoptosis. Disordered stretches follow at residues 603–679 (TPSW…GPQP) and 696–732 (MWGHTGAQSSDDKTECSENPCMGPLTDQGEPLLETPE). Composition is skewed to pro residues over residues 604-615 (PSWPGCPQPIPS) and 625-657 (PYSPQPPSFPQPPCFPQPPSFPQPPSFPLPPVS). Over residues 658–671 (SPQSQSFPSASSPA) the composition is skewed to low complexity.

Homodimer. Found in a multi-helicase-TICAM1 complex at least composed of DHX36, DDX1, DDX21 and TICAM1; this complex exists in resting cells with or without poly(I:C) RNA ligand stimulation. Interacts (via TIR domain) with DDX21 (via C-terminus). Interacts (via TIR domain) with DHX36 (via C-terminus). Interacts with AZI2 and IRF7. Interacts (when phosphorylated) with IRF3; following activation and phosphorylation on the pLxIS motif by TBK1, recruits IRF3. Interacts with TICAM2 in TLR4 recruitment. Interaction with PIAS4 inhibits the TICAM1-induced NF-kappa-B, IRF and IFNB1 activation. Interacts with IKBKB and IKBKE. Interaction with SARM1 blocks TICAM1-dependent transcription factor activation. Interacts with TRAF3. Interacts with TRAFD1. Interacts with UBQLN1 (via UBA domain). Interacts with TBK1, TRAF6 and RIPK1 and these interactions are enhanced in the presence of WDFY1. Interacts (via the TIR domain) with TLR3 in response to poly(I:C) and this interaction is enhanced in the presence of WDFY1. Interacts with TLR4 in response to poly(I:C) in a WDFY1-dependent manner. Interacts with WDFY1 in response to poly(I:C). Interacts with TRIM56. Interacts (via the TIR domain) with TLR5. Interacts with TRIM8. Interacts with TAX1BP1 and TRIM32; these interactions target TICAM1 to TAX1BP1-mediated selective autophagic degradation. Interacts with DDX50. Phosphorylated by TBK1. Following activation, phosphorylated by TBK1 at Ser-209 in the pLxIS motif. The phosphorylated pLxIS motif constitutes an IRF3-binding motif, leading to recruitment of the transcription factor IRF3 to induce type-I interferons and other cytokines. Post-translationally, polyubiquitinated at Lys-228 by TRIM38 with 'Lys-48'-linked chains, leading to proteasomal degradation. Polyubiquitinated with 'Lys-6'- and 'Lys-33'-linked chains in a TRIM8-dependent manner; ubiquitination disrupts the interaction with TBK1 and subsequent interferon production.

The protein localises to the cytoplasm. Its subcellular location is the cytosol. It is found in the cytoplasmic vesicle. The protein resides in the autophagosome. It localises to the mitochondrion. Involved in innate immunity against invading pathogens. Adapter used by TLR3, TLR4 (through TICAM2) and TLR5 to mediate NF-kappa-B and interferon-regulatory factor (IRF) activation, and to induce apoptosis. Ligand binding to these receptors results in TRIF recruitment through its TIR domain. Distinct protein-interaction motifs allow recruitment of the effector proteins TBK1, TRAF6 and RIPK1, which in turn, lead to the activation of transcription factors IRF3 and IRF7, NF-kappa-B and FADD respectively. Phosphorylation by TBK1 on the pLxIS motif leads to recruitment and subsequent activation of the transcription factor IRF3 to induce expression of type I interferon and exert a potent immunity against invading pathogens. Component of a multi-helicase-TICAM1 complex that acts as a cytoplasmic sensor of viral double-stranded RNA (dsRNA) and plays a role in the activation of a cascade of antiviral responses including the induction of pro-inflammatory cytokines. The sequence is that of TIR domain-containing adapter molecule 1 (Ticam1) from Mus musculus (Mouse).